The following is a 229-amino-acid chain: 2-C-methyl-D-erythritol 4-phosphate cytidylyltransferase (229 aa).

This sequence belongs to the IspD/TarI cytidylyltransferase family. IspD subfamily.

It catalyses the reaction 2-C-methyl-D-erythritol 4-phosphate + CTP + H(+) = 4-CDP-2-C-methyl-D-erythritol + diphosphate. It participates in isoprenoid biosynthesis; isopentenyl diphosphate biosynthesis via DXP pathway; isopentenyl diphosphate from 1-deoxy-D-xylulose 5-phosphate: step 2/6. Catalyzes the formation of 4-diphosphocytidyl-2-C-methyl-D-erythritol from CTP and 2-C-methyl-D-erythritol 4-phosphate (MEP). This Clostridium botulinum (strain ATCC 19397 / Type A) protein is 2-C-methyl-D-erythritol 4-phosphate cytidylyltransferase.